A 248-amino-acid polypeptide reads, in one-letter code: Homeobox protein CHOX-CAD (248 aa).

A DNA-binding region (homeobox) is located at residues 137 to 196; it reads KDKYRVVYTDHQRLELEKEFHYSRYITIRRKAELAAALGLTERQVKIWFQNRRAKERKVN. The interval 192–248 is disordered; sequence ERKVNKKKLQQQSQPTSTTTPTPPAVGTPGPMGTLCSGSAPSLVSSSPLTIKEEFMP. Low complexity-rich tracts occupy residues 201–211 and 228–240; these read QQQSQPTSTTT and SGSAPSLVSSSPL.

It belongs to the Caudal homeobox family.

It is found in the nucleus. May play an important role during the early steps of organogenesis. This Gallus gallus (Chicken) protein is Homeobox protein CHOX-CAD (CHOX-CAD1).